The sequence spans 362 residues: MIISKQLFLLFFLLFFIFPLRHASNPSKCSSSNSRPHRCGPLEVPIRFPFCDHPLFNLLCTNLNNTVLQLPMSGTFFVQYIDYRKQQIYINDPENCLAKRLLTFNISGSPFSPRFDTLYTFLTCPNELVLPSWYPSIPCLSNSTSSFFATSNFALAESMLPSCQIVKRIYVPADSPFAETRFSSYLNQSLLLEWNSPNCRGCEIDYLRCGFKNKASPEVKCFGAKKSGHLSRAVVAVLICLSIIGAVILFVTCIAIRIHNTPRRRHWAVPAAAATVMQQPREVMATRGLDQSTIEKYKTMELGESRRPPGTNGIVCPICLSEYVSKETVRFIPECDHCFHAKCIDVWLKIHGSCPLCRNSRA.

Residues 1–23 (MIISKQLFLLFFLLFFIFPLRHA) form the signal peptide. The chain crosses the membrane as a helical span at residues 234 to 254 (VVAVLICLSIIGAVILFVTCI). The RING-type; atypical zinc finger occupies 316 to 358 (CPICLSEYVSKETVRFIPECDHCFHAKCIDVWLKIHGSCPLCR).

Belongs to the RING-type zinc finger family. ATL subfamily.

It localises to the membrane. It carries out the reaction S-ubiquitinyl-[E2 ubiquitin-conjugating enzyme]-L-cysteine + [acceptor protein]-L-lysine = [E2 ubiquitin-conjugating enzyme]-L-cysteine + N(6)-ubiquitinyl-[acceptor protein]-L-lysine.. Its pathway is protein modification; protein ubiquitination. This chain is Putative RING-H2 finger protein ATL21B (ATL21B), found in Arabidopsis thaliana (Mouse-ear cress).